The sequence spans 180 residues: Large ribosomal subunit protein uL5 (180 aa).

Belongs to the universal ribosomal protein uL5 family. As to quaternary structure, part of the 50S ribosomal subunit; part of the 5S rRNA/L5/L18/L25 subcomplex. Contacts the 5S rRNA and the P site tRNA. Forms a bridge to the 30S subunit in the 70S ribosome.

In terms of biological role, this is one of the proteins that bind and probably mediate the attachment of the 5S RNA into the large ribosomal subunit, where it forms part of the central protuberance. In the 70S ribosome it contacts protein S13 of the 30S subunit (bridge B1b), connecting the 2 subunits; this bridge is implicated in subunit movement. Contacts the P site tRNA; the 5S rRNA and some of its associated proteins might help stabilize positioning of ribosome-bound tRNAs. The protein is Large ribosomal subunit protein uL5 of Chlamydia felis (strain Fe/C-56) (Chlamydophila felis).